The following is a 681-amino-acid chain: Potassium-transporting ATPase ATP-binding subunit (681 aa).

4 helical membrane passes run 30-50, 59-79, 216-236, and 255-275; these read LLVY…FFGI, LAIA…EAIA, ILLV…LPFT, and IALL…SIGI. The active-site 4-aspartylphosphate intermediate is the aspartate 306. Residues aspartate 343, glutamate 347, 376–383, and lysine 394 each bind ATP; that span reads FTATTRMS. Aspartate 517 and aspartate 521 together coordinate Mg(2+). Helical transmembrane passes span 587-607, 615-635, and 661-681; these read FAII…LNLM, AILS…PLSL, and LIAP…LGIV.

Belongs to the cation transport ATPase (P-type) (TC 3.A.3) family. Type IA subfamily. The system is composed of three essential subunits: KdpA, KdpB and KdpC.

It localises to the cell membrane. It catalyses the reaction K(+)(out) + ATP + H2O = K(+)(in) + ADP + phosphate + H(+). Functionally, part of the high-affinity ATP-driven potassium transport (or Kdp) system, which catalyzes the hydrolysis of ATP coupled with the electrogenic transport of potassium into the cytoplasm. This subunit is responsible for energy coupling to the transport system and for the release of the potassium ions to the cytoplasm. The protein is Potassium-transporting ATPase ATP-binding subunit of Listeria monocytogenes serotype 4a (strain HCC23).